The following is a 346-amino-acid chain: Holliday junction branch migration complex subunit RuvB (346 aa).

Positions 1–182 are large ATPase domain (RuvB-L); that stretch reads MSEAARLIAP…FGIPVRLNFY (182 aa). ATP contacts are provided by residues Leu-21, Arg-22, Gly-63, Lys-66, Thr-67, Thr-68, 129-131, Arg-172, Tyr-182, and Arg-219; that span reads EDF. Thr-67 provides a ligand contact to Mg(2+). Positions 183–253 are small ATPAse domain (RuvB-S); it reads TVEELELIVR…IADEALTRLL (71 aa). The head domain (RuvB-H) stretch occupies residues 256–346; it reads SMGLDQLDRR…SQFRLTLEDD (91 aa). Residues Arg-292, Arg-311, and Arg-316 each coordinate DNA.

It belongs to the RuvB family. As to quaternary structure, homohexamer. Forms an RuvA(8)-RuvB(12)-Holliday junction (HJ) complex. HJ DNA is sandwiched between 2 RuvA tetramers; dsDNA enters through RuvA and exits via RuvB. An RuvB hexamer assembles on each DNA strand where it exits the tetramer. Each RuvB hexamer is contacted by two RuvA subunits (via domain III) on 2 adjacent RuvB subunits; this complex drives branch migration. In the full resolvosome a probable DNA-RuvA(4)-RuvB(12)-RuvC(2) complex forms which resolves the HJ.

Its subcellular location is the cytoplasm. The enzyme catalyses ATP + H2O = ADP + phosphate + H(+). In terms of biological role, the RuvA-RuvB-RuvC complex processes Holliday junction (HJ) DNA during genetic recombination and DNA repair, while the RuvA-RuvB complex plays an important role in the rescue of blocked DNA replication forks via replication fork reversal (RFR). RuvA specifically binds to HJ cruciform DNA, conferring on it an open structure. The RuvB hexamer acts as an ATP-dependent pump, pulling dsDNA into and through the RuvAB complex. RuvB forms 2 homohexamers on either side of HJ DNA bound by 1 or 2 RuvA tetramers; 4 subunits per hexamer contact DNA at a time. Coordinated motions by a converter formed by DNA-disengaged RuvB subunits stimulates ATP hydrolysis and nucleotide exchange. Immobilization of the converter enables RuvB to convert the ATP-contained energy into a lever motion, pulling 2 nucleotides of DNA out of the RuvA tetramer per ATP hydrolyzed, thus driving DNA branch migration. The RuvB motors rotate together with the DNA substrate, which together with the progressing nucleotide cycle form the mechanistic basis for DNA recombination by continuous HJ branch migration. Branch migration allows RuvC to scan DNA until it finds its consensus sequence, where it cleaves and resolves cruciform DNA. The protein is Holliday junction branch migration complex subunit RuvB of Sinorhizobium medicae (strain WSM419) (Ensifer medicae).